The following is a 357-amino-acid chain: tRNA N6-adenosine threonylcarbamoyltransferase (357 aa).

Fe cation is bound by residues histidine 115 and histidine 119. Substrate is bound by residues 137–141, aspartate 170, glycine 183, and asparagine 281; that span reads LASGG. Aspartate 309 is a Fe cation binding site.

The protein belongs to the KAE1 / TsaD family. Requires Fe(2+) as cofactor.

The protein resides in the cytoplasm. It catalyses the reaction L-threonylcarbamoyladenylate + adenosine(37) in tRNA = N(6)-L-threonylcarbamoyladenosine(37) in tRNA + AMP + H(+). In terms of biological role, required for the formation of a threonylcarbamoyl group on adenosine at position 37 (t(6)A37) in tRNAs that read codons beginning with adenine. Is involved in the transfer of the threonylcarbamoyl moiety of threonylcarbamoyl-AMP (TC-AMP) to the N6 group of A37, together with TsaE and TsaB. TsaD likely plays a direct catalytic role in this reaction. The polypeptide is tRNA N6-adenosine threonylcarbamoyltransferase (Nitrobacter winogradskyi (strain ATCC 25391 / DSM 10237 / CIP 104748 / NCIMB 11846 / Nb-255)).